The chain runs to 178 residues: ATP-dependent protease subunit HslV (178 aa).

The active site involves threonine 7. 3 residues coordinate Na(+): glycine 162, cysteine 165, and threonine 168.

It belongs to the peptidase T1B family. HslV subfamily. A double ring-shaped homohexamer of HslV is capped on each side by a ring-shaped HslU homohexamer. The assembly of the HslU/HslV complex is dependent on binding of ATP.

The protein resides in the cytoplasm. It carries out the reaction ATP-dependent cleavage of peptide bonds with broad specificity.. With respect to regulation, allosterically activated by HslU binding. Its function is as follows. Protease subunit of a proteasome-like degradation complex believed to be a general protein degrading machinery. This Herminiimonas arsenicoxydans protein is ATP-dependent protease subunit HslV.